Consider the following 325-residue polypeptide: Glutarate 2-hydroxylase (325 aa).

Fe cation contacts are provided by histidine 160, aspartate 162, and histidine 292.

It belongs to the glutarate hydroxylase family. In terms of assembly, homotetramer. Fe(2+) is required as a cofactor.

It catalyses the reaction glutarate + 2-oxoglutarate + O2 = (S)-2-hydroxyglutarate + succinate + CO2. It functions in the pathway amino-acid degradation. In terms of biological role, acts as an alpha-ketoglutarate-dependent dioxygenase catalyzing hydroxylation of glutarate (GA) to L-2-hydroxyglutarate (L2HG). Functions in a L-lysine degradation pathway that proceeds via cadaverine, glutarate and L-2-hydroxyglutarate. In Escherichia coli O7:K1 (strain IAI39 / ExPEC), this protein is Glutarate 2-hydroxylase.